The primary structure comprises 123 residues: Small ribosomal subunit protein uS12cz/uS12cy (123 aa).

This sequence belongs to the universal ribosomal protein uS12 family. As to quaternary structure, part of the 30S ribosomal subunit.

It is found in the plastid. It localises to the chloroplast. Functionally, with S4 and S5 plays an important role in translational accuracy. Located at the interface of the 30S and 50S subunits. The chain is Small ribosomal subunit protein uS12cz/uS12cy (rps12-A) from Psilotum nudum (Whisk fern).